The chain runs to 253 residues: Short chain dehydrogenase ple7 (253 aa).

Residues 5 to 25 form a helical membrane-spanning segment; the sequence is IVIVTGASHGIGLATVNLLLA. 5 residues coordinate NADP(+): Val8, Arg116, Tyr148, Lys152, and Asn184. Tyr148 (proton acceptor) is an active-site residue. Lys152 serves as the catalytic Lowers pKa of active site Tyr. Asn187 carries N-linked (GlcNAc...) asparagine glycosylation.

This sequence belongs to the short-chain dehydrogenases/reductases (SDR) family.

The protein localises to the membrane. It functions in the pathway secondary metabolite biosynthesis; terpenoid biosynthesis. Short chain dehydrogenase; part of the gene cluster that mediates the biosynthesis of pleuromutilin, a tricyclic diterpene showing antibacterial properties. The geranylgeranyl diphosphate (GGPP) synthase ple4 catalyzes the first step in pleuromutilin biosynthesis. GGPP is then substrate of the premutilin synthase (PS) ple3 to yield premutilin. Premutilin synthase is a bifunctional enzyme composed of the fusion of a class II diterpene cyclase (DTC) and a class I diterpene synthase (DTS), with the corresponding domains and active sites containing characteristic aspartate-rich motifs. GGPP is first converted to mutildienyl-diphosphate (MPP) at the class II DTC site. MPP is subsequently further cyclized at the class I DTS site, followed by a 1,5-hydride shift and addition of water prior to terminating deprotonation, to yield premutilin. The cytochrome P450 monooxygenases ple5 and ple6 hydroxylate premutilin at C-11 and C-3, respectively, producing 11-hydroxypremutilin and 3-hydroxypremutilin. The combination of the actions of both ple5 and ple6 leads to the production of 3,11-dihydroxypremutilin. The short chain dehydrogenase ple7 further converts 3,11-dihydroxypremutilin into mutilin. The acetyltransferase ple2 then acetylates mutilin to produce 14-O-acetylmutilin. Finally, the cytochrome P450 monooxygenase ple1 catalyzes hydroxylation on the alpha position of the acetyl side chain of 14-O-acetylmutilin to yield pleuromutilin. In Rhodocybe pseudopiperita (Clitopilus pseudopiperitus), this protein is Short chain dehydrogenase ple7.